The primary structure comprises 427 residues: MFSKIKGTHDLMLDKMVCWQKVENHIRTLFAKYHLQEIRTPIIEYRGVFDRAAQHSEMVSKETYTFTDKKGRFITLRPEGTAGVIRSYVENKLDKTSQLHKFFYYGPFFRYERPQKGRYRQFHQVGVEILGQSSPFLDVEVIFLAYKTLKSLGICDITVKINSLGCKTTYNNYLQVFKNYLQTHYQQLCPLCQERFEKNILRIWDCKNCNNEPFLKQAPRIFDHLVEDAKVRFLQVLEGLKQMNVNFELCHDLVRGLDYYTNSVFEIVYNNEQGHQAVLGGGGCYDNLVTLFRGSPSPGIGFALGMERLMSILATRSFCNKNILPSLDAFILVSEPQFFYQGLELATTLRHQGFSADLNYKFLSFSKSLKQALKKQPLYLLILGPKEFANNQITIKNTYTQQQTTILQKDVVSYLQNNKELNYIHEN.

Belongs to the class-II aminoacyl-tRNA synthetase family. Homodimer.

It is found in the cytoplasm. The enzyme catalyses tRNA(His) + L-histidine + ATP = L-histidyl-tRNA(His) + AMP + diphosphate + H(+). This Aster yellows witches'-broom phytoplasma (strain AYWB) protein is Histidine--tRNA ligase.